The primary structure comprises 126 residues: NADP-reducing hydrogenase subunit HndB (126 aa).

As to quaternary structure, heterotetramer composed of HndA, HndB, HndC and HndD subunits. HndA and HndB could form a heterodimeric intermediate in the electron transfer between the active site of hydrogenase subunit HndD and the NADP reduction site of the reducing subunit HndC.

It carries out the reaction H2 + NADP(+) = NADPH + H(+). Its activity is regulated as follows. Inhibited by oxygen. Catalyzes the reduction of NADP in the presence of molecular H2 to yield NADPH. This is NADP-reducing hydrogenase subunit HndB (hndB) from Solidesulfovibrio fructosivorans (Desulfovibrio fructosivorans).